We begin with the raw amino-acid sequence, 377 residues long: Homoserine O-acetyltransferase (377 aa).

Residues 48–347 form the AB hydrolase-1 domain; sequence NVVLIEHALT…PVGHDAFLTE (300 aa). Residue Ser-143 is the Nucleophile of the active site. Arg-213 provides a ligand contact to substrate. Residues Asp-311 and His-341 contribute to the active site. Asp-342 contacts substrate.

Belongs to the AB hydrolase superfamily. MetX family. As to quaternary structure, homodimer.

It localises to the cytoplasm. The catalysed reaction is L-homoserine + acetyl-CoA = O-acetyl-L-homoserine + CoA. Its pathway is amino-acid biosynthesis; L-methionine biosynthesis via de novo pathway; O-acetyl-L-homoserine from L-homoserine: step 1/1. Transfers an acetyl group from acetyl-CoA to L-homoserine, forming acetyl-L-homoserine. The chain is Homoserine O-acetyltransferase from Corynebacterium efficiens (strain DSM 44549 / YS-314 / AJ 12310 / JCM 11189 / NBRC 100395).